Consider the following 158-residue polypeptide: Transcription elongation factor GreA (158 aa).

The protein belongs to the GreA/GreB family.

Necessary for efficient RNA polymerase transcription elongation past template-encoded arresting sites. The arresting sites in DNA have the property of trapping a certain fraction of elongating RNA polymerases that pass through, resulting in locked ternary complexes. Cleavage of the nascent transcript by cleavage factors such as GreA or GreB allows the resumption of elongation from the new 3'terminus. GreA releases sequences of 2 to 3 nucleotides. In Methylobacterium sp. (strain 4-46), this protein is Transcription elongation factor GreA.